The primary structure comprises 120 residues: Large ribosomal subunit protein eL18 (120 aa).

It belongs to the eukaryotic ribosomal protein eL18 family.

The polypeptide is Large ribosomal subunit protein eL18 (Methanococcus maripaludis (strain DSM 14266 / JCM 13030 / NBRC 101832 / S2 / LL)).